We begin with the raw amino-acid sequence, 163 residues long: Phosphopantetheine adenylyltransferase (163 aa).

Thr9 contributes to the substrate binding site. ATP-binding positions include 9–10 (TF) and His17. Residues Lys41, Thr73, and Arg87 each contribute to the substrate site. ATP is bound by residues 88–90 (GLR), Glu98, and 123–129 (FSFISSS).

Belongs to the bacterial CoaD family. As to quaternary structure, homohexamer. Mg(2+) is required as a cofactor.

Its subcellular location is the cytoplasm. It carries out the reaction (R)-4'-phosphopantetheine + ATP + H(+) = 3'-dephospho-CoA + diphosphate. It participates in cofactor biosynthesis; coenzyme A biosynthesis; CoA from (R)-pantothenate: step 4/5. Reversibly transfers an adenylyl group from ATP to 4'-phosphopantetheine, yielding dephospho-CoA (dPCoA) and pyrophosphate. This is Phosphopantetheine adenylyltransferase from Desulfitobacterium hafniense (strain Y51).